Here is a 460-residue protein sequence, read N- to C-terminus: Asparagine--tRNA ligase (460 aa).

It belongs to the class-II aminoacyl-tRNA synthetase family. In terms of assembly, homodimer.

The protein resides in the cytoplasm. The catalysed reaction is tRNA(Asn) + L-asparagine + ATP = L-asparaginyl-tRNA(Asn) + AMP + diphosphate + H(+). This chain is Asparagine--tRNA ligase, found in Picosynechococcus sp. (strain ATCC 27264 / PCC 7002 / PR-6) (Agmenellum quadruplicatum).